A 599-amino-acid polypeptide reads, in one-letter code: Elongation factor 4 (599 aa).

In terms of domain architecture, tr-type G spans 2-184 (KHIRNFSIIA…RLVRDIPPPE (183 aa)). GTP is bound by residues 14-19 (DHGKST) and 131-134 (NKID).

It belongs to the TRAFAC class translation factor GTPase superfamily. Classic translation factor GTPase family. LepA subfamily.

It is found in the cell inner membrane. It catalyses the reaction GTP + H2O = GDP + phosphate + H(+). In terms of biological role, required for accurate and efficient protein synthesis under certain stress conditions. May act as a fidelity factor of the translation reaction, by catalyzing a one-codon backward translocation of tRNAs on improperly translocated ribosomes. Back-translocation proceeds from a post-translocation (POST) complex to a pre-translocation (PRE) complex, thus giving elongation factor G a second chance to translocate the tRNAs correctly. Binds to ribosomes in a GTP-dependent manner. In Pectobacterium carotovorum subsp. carotovorum (strain PC1), this protein is Elongation factor 4.